The sequence spans 112 residues: uncharacterized protein (112 aa).

A helical transmembrane segment spans residues 89–106 (TLYVLVIVGLTILCFLLV).

This sequence belongs to the IIV-6 466R family.

The protein localises to the membrane. This is an uncharacterized protein from Aedes vexans (Inland floodwater mosquito).